A 947-amino-acid polypeptide reads, in one-letter code: Protein translocase subunit SecA (947 aa).

ATP-binding positions include Gln-87, 105–109 (GEGKT), and Asp-525. The tract at residues 905–928 (PADNADKTARNPNDPSTWGKVGRN) is disordered. Zn(2+) contacts are provided by Cys-931, Cys-933, Cys-942, and His-943.

This sequence belongs to the SecA family. As to quaternary structure, monomer and homodimer. Part of the essential Sec protein translocation apparatus which comprises SecA, SecYEG and auxiliary proteins SecDF-YajC and YidC. Requires Zn(2+) as cofactor.

It is found in the cell inner membrane. The protein localises to the cytoplasm. It catalyses the reaction ATP + H2O + cellular proteinSide 1 = ADP + phosphate + cellular proteinSide 2.. Part of the Sec protein translocase complex. Interacts with the SecYEG preprotein conducting channel. Has a central role in coupling the hydrolysis of ATP to the transfer of proteins into and across the cell membrane, serving both as a receptor for the preprotein-SecB complex and as an ATP-driven molecular motor driving the stepwise translocation of polypeptide chains across the membrane. In Rhodopseudomonas palustris (strain BisB18), this protein is Protein translocase subunit SecA.